Here is a 499-residue protein sequence, read N- to C-terminus: MADNLLSEQLLQRLQDGDNKGVDTLELAAVLSVDHQQVVGAVKSLQCLGEIIEAEQRSSKKWELSSEGEEIAQVGSHEARVFQSLPKEGLLQAELMKLPFAKVGFSKAMSNKWIRLDKAAAGGPCVYRVVETIEDTVKEKLQLILKGRADDVNEKDKNELKKRKLVNEVTVKSYWVTKGSGFSTSITKQETDLTPEMIASGSWREKQFKGYNFNALGVMPECGHLHPLLKVRTQFRQIFLEMGFTEMPTNNFIESSFWNFDALFQPQQHPARDQHDTFFLQDPALATEFPMEYLERVKKVHSEGGYGSQGYKYDWSIHEAQKNILRTHTTAVSARMLYKLAHQKEFTPVKYFSIDRVFRNETLDATHLAEFHQIEGVVADRGLTLGNLMGVLKEFFHKLGITKLRFKPAYNPYTEPSMEVFSYHEGLKKWVEVGNSGLFRPELLLPMGLPGDVNVLGWGLSLERPTMIRYGIKNIRELVGHKVNLQMVYDSPICRLDAC.

L-phenylalanine is bound by residues Thr330, 373–375 (QIE), and Tyr413. Glu415 is a Mg(2+) binding site. Phe439 provides a ligand contact to L-phenylalanine.

It belongs to the class-II aminoacyl-tRNA synthetase family. Phe-tRNA synthetase alpha subunit type 2 subfamily. In terms of assembly, heterotetramer; dimer of two heterodimers formed by alpha and beta subunits. Mg(2+) serves as cofactor.

It is found in the cytoplasm. The enzyme catalyses tRNA(Phe) + L-phenylalanine + ATP = L-phenylalanyl-tRNA(Phe) + AMP + diphosphate + H(+). This chain is Phenylalanine--tRNA ligase alpha subunit B (farsa-b), found in Xenopus laevis (African clawed frog).